A 597-amino-acid chain; its full sequence is Aspartate--tRNA ligase (597 aa).

E173 serves as a coordination point for L-aspartate. An aspartate region spans residues 197–200 (QLFK). R219 contributes to the L-aspartate binding site. Residues 219–221 (RDE) and Q228 each bind ATP. An L-aspartate-binding site is contributed by H449. E483 is an ATP binding site. R490 lines the L-aspartate pocket. Position 535–538 (535–538 (GLDR)) interacts with ATP.

It belongs to the class-II aminoacyl-tRNA synthetase family. Type 1 subfamily. Homodimer.

The protein localises to the cytoplasm. The catalysed reaction is tRNA(Asp) + L-aspartate + ATP = L-aspartyl-tRNA(Asp) + AMP + diphosphate. In terms of biological role, catalyzes the attachment of L-aspartate to tRNA(Asp) in a two-step reaction: L-aspartate is first activated by ATP to form Asp-AMP and then transferred to the acceptor end of tRNA(Asp). In Shewanella pealeana (strain ATCC 700345 / ANG-SQ1), this protein is Aspartate--tRNA ligase.